Here is a 423-residue protein sequence, read N- to C-terminus: MDIDQYMTDLGRRARHASRAMARASTAAKNAALDAVARAIERDASALKEANARDVARARDKGLDAAFIDRLTLSDKALKTMVEGLRQVASLADPIGEISNLKYRPSGIQVGQMRVPLGVIGIIYESRPNVTIDAAALCLKSGNATILRGGSEALESNAALAKLIGEGLEAAGLPQDAVQVVATADRAAVGKLITMTEYVDVIVPRGGKSLIERLINEARVPMIKHLDGICHVYVDDRADLAKALTVCDNAKTHRYGTCNTMETLLVSSGIAAALLPPLGKLYRDKQVELRVDAAARAVLADAGVGPLVDATDADWHTEYLAPVLAIKVVDGLDAAIEHINHYGSHHTDAIVTEDHDRAMRFLREVDSASVMVNASTRFADGFEFGLGAEIGISNDKLHARGPVGLEGLTSLKYVVLGHGEGRQ.

It belongs to the gamma-glutamyl phosphate reductase family.

The protein localises to the cytoplasm. It carries out the reaction L-glutamate 5-semialdehyde + phosphate + NADP(+) = L-glutamyl 5-phosphate + NADPH + H(+). It functions in the pathway amino-acid biosynthesis; L-proline biosynthesis; L-glutamate 5-semialdehyde from L-glutamate: step 2/2. Its function is as follows. Catalyzes the NADPH-dependent reduction of L-glutamate 5-phosphate into L-glutamate 5-semialdehyde and phosphate. The product spontaneously undergoes cyclization to form 1-pyrroline-5-carboxylate. This Burkholderia vietnamiensis (strain G4 / LMG 22486) (Burkholderia cepacia (strain R1808)) protein is Gamma-glutamyl phosphate reductase.